We begin with the raw amino-acid sequence, 110 residues long: Large ribosomal subunit protein uL22 (110 aa).

This sequence belongs to the universal ribosomal protein uL22 family. Part of the 50S ribosomal subunit.

In terms of biological role, this protein binds specifically to 23S rRNA; its binding is stimulated by other ribosomal proteins, e.g. L4, L17, and L20. It is important during the early stages of 50S assembly. It makes multiple contacts with different domains of the 23S rRNA in the assembled 50S subunit and ribosome. Its function is as follows. The globular domain of the protein is located near the polypeptide exit tunnel on the outside of the subunit, while an extended beta-hairpin is found that lines the wall of the exit tunnel in the center of the 70S ribosome. This Idiomarina loihiensis (strain ATCC BAA-735 / DSM 15497 / L2-TR) protein is Large ribosomal subunit protein uL22.